Here is a 64-residue protein sequence, read N- to C-terminus: Beta-toxin Tf1 (64 aa).

The 62-residue stretch at 1 to 62 (KEGYLMDHEG…VWERATNRCG (62 aa)) folds into the LCN-type CS-alpha/beta domain. 4 cysteine pairs are disulfide-bonded: cysteine 11/cysteine 61, cysteine 15/cysteine 37, cysteine 23/cysteine 42, and cysteine 27/cysteine 44. Cysteine 61 carries the cysteine amide modification.

The protein belongs to the long (4 C-C) scorpion toxin superfamily. Sodium channel inhibitor family. Beta subfamily. As to expression, expressed by the venom gland.

The protein localises to the secreted. Its function is as follows. Beta toxins bind voltage-independently at site-4 of sodium channels (Nav) and shift the voltage of activation toward more negative potentials thereby affecting sodium channel activation and promoting spontaneous and repetitive firing. This chain is Beta-toxin Tf1, found in Tityus fasciolatus (Central Brazilian scorpion).